A 342-amino-acid polypeptide reads, in one-letter code: uncharacterized protein (342 aa).

This is an uncharacterized protein from Magallana gigas (Pacific oyster).